Here is a 412-residue protein sequence, read N- to C-terminus: Imidazolonepropionase (412 aa).

Residues His76 and His78 each coordinate Fe(3+). Positions 76 and 78 each coordinate Zn(2+). 3 residues coordinate 4-imidazolone-5-propanoate: Arg85, Tyr148, and His181. Residue Tyr148 coordinates N-formimidoyl-L-glutamate. His242 serves as a coordination point for Fe(3+). His242 is a Zn(2+) binding site. Glu245 contributes to the 4-imidazolone-5-propanoate binding site. Asp317 provides a ligand contact to Fe(3+). Asp317 serves as a coordination point for Zn(2+). The N-formimidoyl-L-glutamate site is built by Asn319 and Gly321. Ser322 provides a ligand contact to 4-imidazolone-5-propanoate.

It belongs to the metallo-dependent hydrolases superfamily. HutI family. Zn(2+) is required as a cofactor. The cofactor is Fe(3+).

Its subcellular location is the cytoplasm. The catalysed reaction is 4-imidazolone-5-propanoate + H2O = N-formimidoyl-L-glutamate. It participates in amino-acid degradation; L-histidine degradation into L-glutamate; N-formimidoyl-L-glutamate from L-histidine: step 3/3. In terms of biological role, catalyzes the hydrolytic cleavage of the carbon-nitrogen bond in imidazolone-5-propanoate to yield N-formimidoyl-L-glutamate. It is the third step in the universal histidine degradation pathway. This Staphylococcus aureus (strain Mu50 / ATCC 700699) protein is Imidazolonepropionase.